Here is a 407-residue protein sequence, read N- to C-terminus: Cell division control protein 12 (407 aa).

Ser2 is subject to N-acetylserine. The region spanning 31-314 (EGGTFTVMLC…ETYRRLRLEG (284 aa)) is the Septin-type G domain. Residues 41–48 (GESGLGKT) are G1 motif. GTP is bound by residues 41 to 48 (GESGLGKT), Thr75, Gly101, 180 to 188 (KADTLTAQE), Gly247, and Arg263. The G3 motif stretch occupies residues 98–101 (DTPG). The tract at residues 179 to 182 (AKAD) is G4 motif. Positions 344-406 (EEENALKKYF…KSLQVKKSHL (63 aa)) form a coiled coil.

This sequence belongs to the TRAFAC class TrmE-Era-EngA-EngB-Septin-like GTPase superfamily. Septin GTPase family. In terms of assembly, component of the septin complex which consists of CDC3, CDC10, CDC11, CDC12 and probably SHS1 and rearranges to a cortical collar of highly ordered filaments at the mother-bud-neck. A complex formed by CDC3, CDC10, CDC11 and CDC12 is capable of forming long filaments in vitro and the components seem to be present in a 2:2:2:2 arrangement in vivo. The filaments are proposed to be formed by the end-to-end polymerization of CDC3-CDC12-CDC11 complexes with CDC10 serving as a bridge to bundle the polymers into paired filaments. Component of the GIN4 complex composed of at least BNI5, CDC3, CDC10, CDC11, CDC12, GIN4, NAP1 and SHS1. Self-associates. Interacts with SYP1.

It localises to the membrane. The protein resides in the bud neck. Functionally, septins are GTPases involved in cytokinesis that assemble early in the cell cycle as a patch at the incipient bud site and form a ring approximate 15 minutes before bud emergence, which transforms into an hour-glass shaped collar of cortical filaments that spans both sides of the mother-bud neck. This collar persists until just before cytokinesis, when it splits into two rings that occupy opposite sides of the neck. The septins at the bud neck serve as a structural scaffold that recruits different components involved in diverse processes at specific stages during the cell cycle. Many proteins bind asymmetrically to the septin collar. The septin assembly is regulated by protein kinases GIN4 and/or CLA4. May act by recruiting MYO1 and HOF1, a protein involved in septation, to the site of cleavage. Septins are also involved in cell morphogenesis, bud site selection, chitin deposition, cell cycle regulation, cell compartmentalization and spore wall formation. This is Cell division control protein 12 (CDC12) from Saccharomyces cerevisiae (strain ATCC 204508 / S288c) (Baker's yeast).